The chain runs to 432 residues: Glutamate--tRNA ligase 2 (432 aa).

A 'HIGH' region motif is present at residues 6–16 (PSPTGDMHIGN). A 'KMSKS' region motif is present at residues 235-239 (KMSKR). Lysine 238 is an ATP binding site.

The protein belongs to the class-I aminoacyl-tRNA synthetase family. Glutamate--tRNA ligase type 1 subfamily. In terms of assembly, monomer.

It localises to the cytoplasm. The enzyme catalyses tRNA(Glu) + L-glutamate + ATP = L-glutamyl-tRNA(Glu) + AMP + diphosphate. In terms of biological role, catalyzes the attachment of glutamate to tRNA(Glu) in a two-step reaction: glutamate is first activated by ATP to form Glu-AMP and then transferred to the acceptor end of tRNA(Glu). The protein is Glutamate--tRNA ligase 2 of Sulfurimonas denitrificans (strain ATCC 33889 / DSM 1251) (Thiomicrospira denitrificans (strain ATCC 33889 / DSM 1251)).